Reading from the N-terminus, the 591-residue chain is Transcriptional regulator PUL4 (591 aa).

A DNA-binding region (zn(2)-C6 fungal-type) is located at residues 3–29 (CLECKKRKQKCDGQKPCRRCTKLNVKC).

The protein resides in the nucleus. Functionally, transcription factor involved in regulation of the PUL gene cluster that mediates the formation of pulcherrimin, a red iron-containing pigment composed of two cyclized and modified leucine molecules that acts as a siderophore, a chelator that binds iron outside the cell for subsequent uptake. This Kluyveromyces lactis (strain ATCC 8585 / CBS 2359 / DSM 70799 / NBRC 1267 / NRRL Y-1140 / WM37) (Yeast) protein is Transcriptional regulator PUL4.